The following is a 132-amino-acid chain: Small ribosomal subunit protein uS8 (132 aa).

It belongs to the universal ribosomal protein uS8 family. As to quaternary structure, part of the 30S ribosomal subunit. Contacts proteins S5 and S12.

Functionally, one of the primary rRNA binding proteins, it binds directly to 16S rRNA central domain where it helps coordinate assembly of the platform of the 30S subunit. In Psychrobacter cryohalolentis (strain ATCC BAA-1226 / DSM 17306 / VKM B-2378 / K5), this protein is Small ribosomal subunit protein uS8.